The chain runs to 118 residues: Sarafotoxin-i1 (118 aa).

Positions 1–23 (MALLPRLAAGGLLLLLALAALDG) are cleaved as a signal peptide. The propeptide occupies 24–84 (KPAPPKLLQK…LSPLRKPQPL (61 aa)). Intrachain disulfides connect Cys85-Cys99 and Cys87-Cys95. Positions 112 to 118 (PSPIQSS) are excised as a propeptide.

It belongs to the endothelin/sarafotoxin family. Post-translationally, different length molecules ranging from 15 (85-99) to 30 amino acids (85-114) have been found in the venom. As to expression, expressed by the venom gland.

Its subcellular location is the secreted. Its function is as follows. Vasoconstrictor activity. These toxins cause cardiac arrest probably as a result of coronary vasospasm. Functionally, sarafotoxin-i3: vasoconstrictor activity. Causes cardiac arrest probably as a result of coronary vasospasm. Displays low agonistic activities towards endothelin-2 receptor (EDNRB) (displays affinity in the micromolar range). The chain is Sarafotoxin-i1 from Atractaspis irregularis (Variable burrowing asp).